The sequence spans 338 residues: UDP-3-O-acylglucosamine N-acyltransferase (338 aa).

The Proton acceptor role is filled by His-251.

This sequence belongs to the transferase hexapeptide repeat family. LpxD subfamily. As to quaternary structure, homotrimer.

It catalyses the reaction a UDP-3-O-[(3R)-3-hydroxyacyl]-alpha-D-glucosamine + a (3R)-hydroxyacyl-[ACP] = a UDP-2-N,3-O-bis[(3R)-3-hydroxyacyl]-alpha-D-glucosamine + holo-[ACP] + H(+). Its pathway is bacterial outer membrane biogenesis; LPS lipid A biosynthesis. Its function is as follows. Catalyzes the N-acylation of UDP-3-O-acylglucosamine using 3-hydroxyacyl-ACP as the acyl donor. Is involved in the biosynthesis of lipid A, a phosphorylated glycolipid that anchors the lipopolysaccharide to the outer membrane of the cell. This is UDP-3-O-acylglucosamine N-acyltransferase from Psychrobacter arcticus (strain DSM 17307 / VKM B-2377 / 273-4).